Consider the following 226-residue polypeptide: Putative O-methyltransferase Mvan_4497 (226 aa).

Residues valine 53, glutamate 75, glycine 77–threonine 78, serine 83, aspartate 101, and valine 102 each bind S-adenosyl-L-methionine. Aspartate 149 is a substrate binding site.

This sequence belongs to the class I-like SAM-binding methyltransferase superfamily. Cation-dependent O-methyltransferase family.

In Mycolicibacterium vanbaalenii (strain DSM 7251 / JCM 13017 / BCRC 16820 / KCTC 9966 / NRRL B-24157 / PYR-1) (Mycobacterium vanbaalenii), this protein is Putative O-methyltransferase Mvan_4497.